Here is a 378-residue protein sequence, read N- to C-terminus: Phosphoglycerate kinase (378 aa).

(2R)-3-phosphoglycerate-binding residues include Val-1, Asp-2, Phe-3, Asn-4, Asn-16, Arg-17, Ser-40, His-41, Gly-43, Arg-44, Leu-99, Arg-100, His-147, and Arg-148. Gly-191 is an ADP binding site. CDP is bound at residue Gly-191. Ala-192 and Lys-193 together coordinate AMP. Ala-192 serves as a coordination point for ATP. Ala-192 contacts Mg(2+). Asp-196 contributes to the CDP binding site. Asp-196 contributes to the Mg(2+) binding site. Lys-197 lines the AMP pocket. Lys-197 lines the ATP pocket. Residue Gly-215 participates in ADP binding. Gly-215 lines the CDP pocket. Residues Gly-216 and Gly-288 each coordinate AMP. ATP-binding residues include Gly-216 and Gly-288. Positions 313 and 318 each coordinate CDP. ADP is bound at residue Phe-318. Residue Glu-319 participates in AMP binding. Residues Glu-319, Asp-351, and Thr-352 each coordinate ATP. Position 351 (Asp-351) interacts with Mg(2+).

This sequence belongs to the phosphoglycerate kinase family. In terms of assembly, monomer. Mg(2+) is required as a cofactor.

It catalyses the reaction (2R)-3-phosphoglycerate + ATP = (2R)-3-phospho-glyceroyl phosphate + ADP. Its pathway is carbohydrate degradation; glycolysis; pyruvate from D-glyceraldehyde 3-phosphate: step 2/5. This Condylostoma magnum protein is Phosphoglycerate kinase (PGK).